Consider the following 3164-residue polypeptide: Genome polyprotein (3164 aa).

The 144-residue stretch at 219-362 (KMNDQGVDML…RTMSHKIVHF (144 aa)) folds into the Peptidase S30 domain. Catalysis depends on for P1 proteinase activity residues His-270, Asp-279, and Ser-313. The Involved in interaction with stylet and aphid transmission signature appears at 414–417 (KITC). An Involved in virions binding and aphid transmission motif is present at residues 672 to 674 (PTK). Residues 698 to 820 (MYIAKEGYCY…ESSLKHYRVG (123 aa)) form the Peptidase C6 domain. Active-site for helper component proteinase activity residues include Cys-706 and His-779. A Helicase ATP-binding domain is found at 1300–1452 (KIAHESDKDI…TQYPVSISTE (153 aa)). 1313–1320 (GAVGSGKS) contacts ATP. The short motif at 1402–1405 (DECH) is the DEAH box element. The Helicase C-terminal domain occupies 1471 to 1630 (DVISKGDNIL…GLPVITNNVS (160 aa)). The Cytoplasmic segment spans residues 1872–1889 (NTSDMSKFLKLKGKWNKT). Residues 1890 to 1910 (LITRDVLVLCGVLGGGLWMVI) traverse the membrane as a helical segment. At 1911 to 1924 (QHLRSKMSEPVTHE) the chain is on the lumenal side. The Nuclear localization signal motif lies at 1965 to 1972 (KKGKSKGR). Position 1987 is an O-(5'-phospho-RNA)-tyrosine (Tyr-1987). Residues 2117 to 2335 (SNSMFRGLRD…ISWGSLNIQA (219 aa)) enclose the Peptidase C4 domain. Catalysis depends on for nuclear inclusion protein A activity residues His-2162, Asp-2197, and Cys-2267. The region spanning 2601 to 2725 (WVYCDADGSQ…SVHPEYEYIL (125 aa)) is the RdRp catalytic domain. Residues 2884–2935 (GLTDEQKQAEKEKKEREKAEKERERQKQLALKKGKDVAQEEGKRDKEVNAGT) are disordered. Over residues 2887 to 2931 (DEQKQAEKEKKEREKAEKERERQKQLALKKGKDVAQEEGKRDKEV) the composition is skewed to basic and acidic residues. Thr-3147 bears the Phosphothreonine mark.

Belongs to the potyviridae genome polyprotein family. In terms of assembly, interacts with host eIF4E protein (via cap-binding region); this interaction mediates the translation of the VPg-viral RNA conjugates. Part of a complex that comprises VPg, RNA, host EIF4E and EIF4G; this interaction mediates the translation of the VPg-viral RNA conjugates. As to quaternary structure, interacts, via N-terminal region, with host Sec24a protein in COPII-coated vesicles. This binding triggers the formation of host endoplasmic reticulum (ER)-derived viral vesicles involved in cell-to-cell viral movement. VPg is uridylylated by the polymerase and is covalently attached to the 5'-end of the genomic RNA. This uridylylated form acts as a nucleotide-peptide primer for the polymerase. Post-translationally, potyviral RNA is expressed as two polyproteins which undergo post-translational proteolytic processing. Genome polyprotein is processed by NIa-pro, P1 and HC-pro proteinases resulting in the production of at least ten individual proteins. P3N-PIPO polyprotein is cleaved by P1 and HC-pro proteinases resulting in the production of three individual proteins. The P1 proteinase and the HC-pro cleave only their respective C-termini autocatalytically. 6K1 is essential for proper proteolytic separation of P3 from CI.

Its subcellular location is the host cytoplasm. The protein resides in the host nucleus. The protein localises to the host cytoplasmic vesicle. It localises to the host membrane. It is found in the virion. The catalysed reaction is RNA(n) + a ribonucleoside 5'-triphosphate = RNA(n+1) + diphosphate. It catalyses the reaction Hydrolyzes glutaminyl bonds, and activity is further restricted by preferences for the amino acids in P6 - P1' that vary with the species of potyvirus, e.g. Glu-Xaa-Xaa-Tyr-Xaa-Gln-|-(Ser or Gly) for the enzyme from tobacco etch virus. The natural substrate is the viral polyprotein, but other proteins and oligopeptides containing the appropriate consensus sequence are also cleaved.. It carries out the reaction Hydrolyzes a Gly-|-Gly bond at its own C-terminus, commonly in the sequence -Tyr-Xaa-Val-Gly-|-Gly, in the processing of the potyviral polyprotein.. In terms of biological role, cysteine protease that cleaves a Gly-Gly dipeptide at its own C-terminus. Required for aphid transmission and also has proteolytic activity. Interacts with virions and aphid stylets. Acts as a suppressor of RNA-mediated gene silencing, also known as post-transcriptional gene silencing (PTGS), a mechanism of plant viral defense that limits the accumulation of viral RNAs. May have RNA-binding activity. Its function is as follows. Has helicase activity. It may be involved in replication. Functionally, indispensable for virus replication. Reduces the abundance of host transcripts related to jasmonic acid biosynthesis therefore altering the host defenses. In order to increase its own stability, decreases host protein degradation pathways. Responsible for the formation of peripheral motile host endoplasmic reticulum (ER)-derived viral vesicles called 'viral factories', seat of the viral RNA (vRNA) replication and carrying vRNA to plasmodesmata for delivery into adjacent non-infected cells; this process relies on host Sec24a-binding. In terms of biological role, mediates the cap-independent, EIF4E-dependent translation of viral genomic RNAs. Binds to the cap-binding site of host EIF4E and thus interferes with the host EIF4E-dependent mRNA export and translation. VPg-RNA directly binds EIF4E and is a template for transcription. Also forms trimeric complexes with EIF4E-EIF4G, which are templates for translation. Its function is as follows. Has RNA-binding and proteolytic activities. Functionally, RNA-dependent RNA polymerase that ensures transcription and replication of viral RNA (vRNA). Involved in aphid transmission, cell-to-cell and systemis movement, encapsidation of the viral RNA and in the regulation of viral RNA amplification. The protein is Genome polyprotein of Turnip mosaic virus (strain Japanese) (TuMV).